A 199-amino-acid polypeptide reads, in one-letter code: Fe/S biogenesis protein NfuA (199 aa).

The [4Fe-4S] cluster site is built by cysteine 151 and cysteine 154.

Belongs to the NfuA family. In terms of assembly, homodimer. [4Fe-4S] cluster serves as cofactor.

Its function is as follows. Involved in iron-sulfur cluster biogenesis. Binds a 4Fe-4S cluster, can transfer this cluster to apoproteins, and thereby intervenes in the maturation of Fe/S proteins. Could also act as a scaffold/chaperone for damaged Fe/S proteins. The polypeptide is Fe/S biogenesis protein NfuA (Xanthomonas axonopodis pv. citri (strain 306)).